The following is a 244-amino-acid chain: Gas vesicle protein F (244 aa).

It belongs to the gas vesicle GvpF/GvpL family. As to quaternary structure, binds GvpA.

It is found in the gas vesicle. Its function is as follows. A minor component of the gas vesicle, may be involved in preventing GvpA aggregation during gas vesicle nucleation. Gas vesicles (GV) are hollow, gas filled proteinaceous nanostructures. During planktonic growth they allow positioning of the organism at a favorable depth for light or nutrient acquisition. Functionally, cluster expression in E.coli (gvpA1-gvpA2-gvpC-gvpN-gvpJ-gvpK-gvpF-gvpG-gvpV-gvpW) allows cells to float and produces irregularly shaped gas vesicles. The protein is Gas vesicle protein F of Nostoc sp. (strain PCC 7120 / SAG 25.82 / UTEX 2576).